The primary structure comprises 135 residues: Large ribosomal subunit protein uL16m (135 aa).

The protein belongs to the universal ribosomal protein uL16 family.

It is found in the mitochondrion. This is Large ribosomal subunit protein uL16m (RPL16) from Marchantia polymorpha (Common liverwort).